Consider the following 488-residue polypeptide: Annexin A7 (488 aa).

Residues 1–18 (MSYPGYPPTGYPPFPGYP) show a composition bias toward pro residues. 2 disordered regions span residues 1–49 (MSYP…YPQV) and 71–143 (GYPG…PTYP). A repeat-rich region region spans residues 1–143 (MSYPGYPPTG…QYPGGQPTYP (143 aa)). Residues 5 to 20 (GYPPTGYPPFPGYPPA) form a 3 X 5 AA tandem repeats of G-Y-P-P-X region. A compositionally biased stretch (gly residues) spans 89–102 (PGQGFGVPPGGAGF). Annexin repeat units follow at residues 185 to 256 (FDAI…ALFM), 257 to 328 (PPTY…SMCQ), 340 to 412 (QMAQ…TILQ), and 416 to 487 (NRPA…AIVG). Lysine 233 is modified (N6-acetyllysine).

This sequence belongs to the annexin family. As to quaternary structure, interacts with PDCD6. In terms of tissue distribution, isoform 1 is expressed in brain, heart and skeletal muscle. Isoform 2 is more abundant in liver, lung, kidney, spleen, fibroblasts and placenta.

Its function is as follows. Calcium/phospholipid-binding protein which promotes membrane fusion and is involved in exocytosis. The sequence is that of Annexin A7 (ANXA7) from Homo sapiens (Human).